The primary structure comprises 396 residues: Enoyl-[acyl-carrier-protein] reductase [NADH] (396 aa).

Residues 47-52, 73-74, 110-111, and 138-139 contribute to the NAD(+) site; these read GASTGF, FE, DA, and LA. Residue Y224 coordinates substrate. The active-site Proton donor is the Y234. Residues K243 and 272-274 each bind NAD(+); that span reads LVT.

The protein belongs to the TER reductase family. As to quaternary structure, monomer.

The catalysed reaction is a 2,3-saturated acyl-[ACP] + NAD(+) = a (2E)-enoyl-[ACP] + NADH + H(+). The protein operates within lipid metabolism; fatty acid biosynthesis. Involved in the final reduction of the elongation cycle of fatty acid synthesis (FAS II). Catalyzes the reduction of a carbon-carbon double bond in an enoyl moiety that is covalently linked to an acyl carrier protein (ACP). The polypeptide is Enoyl-[acyl-carrier-protein] reductase [NADH] (Cytophaga hutchinsonii (strain ATCC 33406 / DSM 1761 / CIP 103989 / NBRC 15051 / NCIMB 9469 / D465)).